The primary structure comprises 417 residues: UPF0761 membrane protein Veis_3782 (417 aa).

Helical transmembrane passes span 54-74 (ILALVPFFTVALAVFTAFPIF), 111-131 (GLGLAGFSVLLVTALALILTI), 151-171 (VLIYWAAITLGPLLLGASLAL), 192-212 (FLFDSLQFMVLAAGMALLYHY), 226-246 (GGLFVALCIELAKKALALYLG), and 261-281 (LPILLVWIYMAWVIVLLGAVV).

Belongs to the UPF0761 family.

Its subcellular location is the cell inner membrane. The sequence is that of UPF0761 membrane protein Veis_3782 from Verminephrobacter eiseniae (strain EF01-2).